The chain runs to 257 residues: Small ribosomal subunit protein uS2 (257 aa).

This sequence belongs to the universal ribosomal protein uS2 family.

In Bartonella henselae (strain ATCC 49882 / DSM 28221 / CCUG 30454 / Houston 1) (Rochalimaea henselae), this protein is Small ribosomal subunit protein uS2.